Consider the following 360-residue polypeptide: Photosystem II protein D1 (360 aa).

Helical transmembrane passes span 29 to 46, 118 to 133, and 142 to 156; these read YIGW…TATS, HFLL…EWEL, and WIFV…AASA. His-118 lines the chlorophyll a pocket. Pheophytin a is bound at residue Tyr-126. The [CaMn4O5] cluster site is built by Asp-170 and Glu-189. The helical transmembrane segment at 197–218 threads the bilayer; sequence FHMAGVAGVFGGSLFSAMHGSL. Residue His-198 coordinates chlorophyll a. A quinone contacts are provided by residues His-215 and 264–265; that span reads SF. Position 215 (His-215) interacts with Fe cation. His-272 is a binding site for Fe cation. A helical transmembrane segment spans residues 274–288; that stretch reads FLAAWPVVGIWLTAL. Positions 332, 333, 342, and 344 each coordinate [CaMn4O5] cluster. The propeptide occupies 345-360; sequence SNEVLPVAVNAPAVNG.

Belongs to the reaction center PufL/M/PsbA/D family. As to quaternary structure, PSII is composed of 1 copy each of membrane proteins PsbA, PsbB, PsbC, PsbD, PsbE, PsbF, PsbH, PsbI, PsbJ, PsbK, PsbL, PsbM, PsbT, PsbX, PsbY, PsbZ, Psb30/Ycf12, at least 3 peripheral proteins of the oxygen-evolving complex and a large number of cofactors. It forms dimeric complexes. It depends on The D1/D2 heterodimer binds P680, chlorophylls that are the primary electron donor of PSII, and subsequent electron acceptors. It shares a non-heme iron and each subunit binds pheophytin, quinone, additional chlorophylls, carotenoids and lipids. D1 provides most of the ligands for the Mn4-Ca-O5 cluster of the oxygen-evolving complex (OEC). There is also a Cl(-1) ion associated with D1 and D2, which is required for oxygen evolution. The PSII complex binds additional chlorophylls, carotenoids and specific lipids. as a cofactor. In terms of processing, tyr-161 forms a radical intermediate that is referred to as redox-active TyrZ, YZ or Y-Z. Post-translationally, C-terminally processed by CTPA; processing is essential to allow assembly of the oxygen-evolving complex and thus photosynthetic growth.

The protein localises to the plastid. It is found in the chloroplast thylakoid membrane. It carries out the reaction 2 a plastoquinone + 4 hnu + 2 H2O = 2 a plastoquinol + O2. Photosystem II (PSII) is a light-driven water:plastoquinone oxidoreductase that uses light energy to abstract electrons from H(2)O, generating O(2) and a proton gradient subsequently used for ATP formation. It consists of a core antenna complex that captures photons, and an electron transfer chain that converts photonic excitation into a charge separation. The D1/D2 (PsbA/PsbD) reaction center heterodimer binds P680, the primary electron donor of PSII as well as several subsequent electron acceptors. The sequence is that of Photosystem II protein D1 from Heterosigma akashiwo (Chromophytic alga).